The sequence spans 416 residues: Gamma-glutamyl phosphate reductase (416 aa).

The protein belongs to the gamma-glutamyl phosphate reductase family.

The protein localises to the cytoplasm. It catalyses the reaction L-glutamate 5-semialdehyde + phosphate + NADP(+) = L-glutamyl 5-phosphate + NADPH + H(+). Its pathway is amino-acid biosynthesis; L-proline biosynthesis; L-glutamate 5-semialdehyde from L-glutamate: step 2/2. Its function is as follows. Catalyzes the NADPH-dependent reduction of L-glutamate 5-phosphate into L-glutamate 5-semialdehyde and phosphate. The product spontaneously undergoes cyclization to form 1-pyrroline-5-carboxylate. This chain is Gamma-glutamyl phosphate reductase, found in Salmonella paratyphi A (strain AKU_12601).